The chain runs to 363 residues: 1,2-Dihydrovomilenine reductase (363 aa).

An Enoyl reductase (ER) domain is found at 24–352; it reads GILSPFKFSR…KGDVRYRFVI (329 aa). Zn(2+) is bound at residue Cys-51. Ser-53 lines the NADP(+) pocket. Residues Asp-54, Glu-74, Cys-104, Cys-107, Cys-110, and Cys-118 each coordinate Zn(2+). NADP(+) is bound by residues Leu-193, Gly-195, Leu-196, Ser-215, Thr-216, Ser-217, Lys-220, Lys-221, Val-278, Ala-280, Thr-302, and Arg-349.

The protein belongs to the zinc-containing alcohol dehydrogenase family. Class-P subfamily. In terms of assembly, homodimer. It depends on Zn(2+) as a cofactor. In terms of tissue distribution, mainly expressed in mature roots and, to a lower extent, in stems and leaves.

It localises to the cytoplasm. The enzyme catalyses 17-O-acetylnorajmaline + NADP(+) = (2R)-1,2-dihydrovomilenine + NADPH + 2 H(+). It catalyses the reaction (20S)-19,20-dihydrovomilenine + NADP(+) = vomilenine + NADPH + H(+). Its pathway is alkaloid biosynthesis; ajmaline biosynthesis. Its function is as follows. Alcohol dehydrogenase involved in the biosynthesis of ajmaline-type monoterpenoid indole alkaloids (MIAs) natural products, important plant-derived pharmaceuticals used in the therapy of heart disorders. Catalyzes the conversion of 1,2-dihydrovomilenine to 17-O-acetylnorajmaline, an intermediate chemical in the biosynthesis of ajmaline. Also able, with a lower efficiency, to convert vomilenine into 19,20-dihydrovomilenine. The sequence is that of 1,2-Dihydrovomilenine reductase from Rauvolfia serpentina (Serpentine wood).